Here is a 473-residue protein sequence, read N- to C-terminus: ATP synthase subunit beta (473 aa).

153-160 contributes to the ATP binding site; that stretch reads GGAGVGKT.

This sequence belongs to the ATPase alpha/beta chains family. In terms of assembly, F-type ATPases have 2 components, CF(1) - the catalytic core - and CF(0) - the membrane proton channel. CF(1) has five subunits: alpha(3), beta(3), gamma(1), delta(1), epsilon(1). CF(0) has three main subunits: a(1), b(2) and c(9-12). The alpha and beta chains form an alternating ring which encloses part of the gamma chain. CF(1) is attached to CF(0) by a central stalk formed by the gamma and epsilon chains, while a peripheral stalk is formed by the delta and b chains.

It is found in the cell inner membrane. It carries out the reaction ATP + H2O + 4 H(+)(in) = ADP + phosphate + 5 H(+)(out). Functionally, produces ATP from ADP in the presence of a proton gradient across the membrane. The catalytic sites are hosted primarily by the beta subunits. This chain is ATP synthase subunit beta, found in Rickettsia massiliae (strain Mtu5).